Consider the following 512-residue polypeptide: Cobyric acid synthase (512 aa).

Positions tryptophan 262–phenylalanine 442 constitute a GATase cobBQ-type domain. Cysteine 343 functions as the Nucleophile in the catalytic mechanism. The active site involves histidine 434.

The protein belongs to the CobB/CobQ family. CobQ subfamily.

It functions in the pathway cofactor biosynthesis; adenosylcobalamin biosynthesis. Its function is as follows. Catalyzes amidations at positions B, D, E, and G on adenosylcobyrinic A,C-diamide. NH(2) groups are provided by glutamine, and one molecule of ATP is hydrogenolyzed for each amidation. The protein is Cobyric acid synthase of Rhodococcus jostii (strain RHA1).